Reading from the N-terminus, the 213-residue chain is Orotate phosphoribosyltransferase (213 aa).

Lys-26 lines the 5-phospho-alpha-D-ribose 1-diphosphate pocket. 34-35 (FF) contacts orotate. Residues 72–73 (YK), Arg-98, Lys-99, Lys-102, and 123–131 (DDVISAGTS) contribute to the 5-phospho-alpha-D-ribose 1-diphosphate site. 2 residues coordinate orotate: Ser-127 and Arg-155.

This sequence belongs to the purine/pyrimidine phosphoribosyltransferase family. PyrE subfamily. In terms of assembly, homodimer. Requires Mg(2+) as cofactor.

The catalysed reaction is orotidine 5'-phosphate + diphosphate = orotate + 5-phospho-alpha-D-ribose 1-diphosphate. The protein operates within pyrimidine metabolism; UMP biosynthesis via de novo pathway; UMP from orotate: step 1/2. Catalyzes the transfer of a ribosyl phosphate group from 5-phosphoribose 1-diphosphate to orotate, leading to the formation of orotidine monophosphate (OMP). The protein is Orotate phosphoribosyltransferase of Neisseria gonorrhoeae (strain NCCP11945).